Consider the following 158-residue polypeptide: Botcinic acid biosynthesis cluster B protein 16 (158 aa).

It participates in polyketide biosynthesis. Part of the gene cluster B that mediates the biosynthesis of botcinic acid and its botcinin derivatives, acetate-derived polyketides that contribute to virulence when combined with the sesquiterpene botrydial. Botcinic acid and its derivatives have been shown to induce chlorosis and necrosis during host plant infection, but also have antifungal activities. Two polyketide synthases, BOA6 and BOA9, are involved in the biosynthesis of botcinins. BOA6 mediates the formation of the per-methylated tetraketide core by condensation of four units of malonyl-CoA with one unit of acetyl-CoA, which would be methylated in activated methylene groups to yield a bicyclic acid intermediate that could then either be converted to botrylactone derivatives or lose the starter acetate unit through a retro-Claisen type C-C bond cleavage to yield botcinin derivatives. The second polyketide synthase, BOA9, is probably required for the biosynthesis of the tetraketide side chain of botcinins. The methyltransferase (MT) domain within BOA6 is probably responsible for the incorporation of four methyl groups. The trans-enoyl reductase BOA5 might take over the enoyl reductase function of BOA6 that misses an ER domain. The monooxygenases BOA2, BOA3 and BOA4 might be involved in further hydroxylations at C4, C5 and C8, whereas BOA7, close to BOA9, could potentially be involved in the hydroxylation at C4 in the side chain of botcinins. The polypeptide is Botcinic acid biosynthesis cluster B protein 16 (Botryotinia fuckeliana (strain B05.10) (Noble rot fungus)).